The sequence spans 89 residues: Class II hydrophobin 2 (89 aa).

Positions 1 to 15 (MKLYIAAALLTLGLA) are cleaved as a signal peptide. 4 cysteine pairs are disulfide-bonded: C34–C74, C45–C66, C46–C58, and C75–C86.

The protein belongs to the cerato-ulmin hydrophobin family. As to quaternary structure, homodimer. Homodimers further self-assemble to form highly ordered films at water-air interfaces through intermolecular interactions.

It is found in the secreted. The protein localises to the cell wall. Functionally, aerial growth, conidiation, and dispersal of filamentous fungi in the environment rely upon a capability of their secreting small amphipathic proteins called hydrophobins (HPBs) with low sequence identity. Class I can self-assemble into an outermost layer of rodlet bundles on aerial cell surfaces, conferring cellular hydrophobicity that supports fungal growth, development and dispersal; whereas Class II form highly ordered films at water-air interfaces through intermolecular interactions but contribute nothing to the rodlet structure. The protein is Class II hydrophobin 2 of Trichoderma asperellum (strain ATCC 204424 / CBS 433.97 / NBRC 101777).